Here is a 294-residue protein sequence, read N- to C-terminus: Lysozyme M1 (294 aa).

Positions 81–294 (GVQGIDVSHW…RLLALANNTA (214 aa)) constitute a Ch-type lysozyme domain. Active-site residues include aspartate 86, aspartate 175, and glutamate 177. Cysteine 185 and cysteine 224 are disulfide-bonded.

It belongs to the glycosyl hydrolase 25 family.

The protein localises to the secreted. It carries out the reaction Hydrolysis of (1-&gt;4)-beta-linkages between N-acetylmuramic acid and N-acetyl-D-glucosamine residues in a peptidoglycan and between N-acetyl-D-glucosamine residues in chitodextrins.. This enzyme has both lysozyme (acetylmuramidase) and diacetylmuramidase activities. This is Lysozyme M1 (acm) from Streptomyces globisporus.